Reading from the N-terminus, the 120-residue chain is Large ribosomal subunit protein eL18 (120 aa).

This sequence belongs to the eukaryotic ribosomal protein eL18 family. As to quaternary structure, part of the 50S ribosomal subunit.

The protein is Large ribosomal subunit protein eL18 of Pyrococcus furiosus (strain ATCC 43587 / DSM 3638 / JCM 8422 / Vc1).